We begin with the raw amino-acid sequence, 455 residues long: uncharacterized protein (455 aa).

N42, N49, and N70 each carry an N-linked (GlcNAc...) asparagine glycan. The next 4 membrane-spanning stretches (helical) occupy residues 127 to 147, 153 to 173, 177 to 197, and 377 to 397; these read AILISFGLIIGALLYLYTWIF, SLLDWMFISCSGIIHQFMFRI, ICALVLIGFWLLCCLVIITYY, and YKFCFIFYGIAIIVFILEIIF. N-linked (GlcNAc...) asparagine glycosylation is present at N403.

Its subcellular location is the membrane. This is an uncharacterized protein from Caenorhabditis elegans.